A 70-amino-acid chain; its full sequence is Sec-independent protein translocase protein TatA (70 aa).

A helical membrane pass occupies residues 1–21 (MFGLGGQELILILLIILLLFG). A compositionally biased stretch (basic and acidic residues) spans 50 to 62 (FNKVVDEPPRKTP). Residues 50–70 (FNKVVDEPPRKTPENSTGSKS) form a disordered region.

It belongs to the TatA/E family. In terms of assembly, forms a complex with TatC.

It localises to the cell inner membrane. Its function is as follows. Part of the twin-arginine translocation (Tat) system that transports large folded proteins containing a characteristic twin-arginine motif in their signal peptide across membranes. TatA could form the protein-conducting channel of the Tat system. This chain is Sec-independent protein translocase protein TatA, found in Chlorobium limicola (strain DSM 245 / NBRC 103803 / 6330).